We begin with the raw amino-acid sequence, 198 residues long: Potassium-transporting ATPase KdpC subunit (198 aa).

A helical transmembrane segment spans residues 8–28 (ILAVLVFTILCGIIYPVSTTV).

Belongs to the KdpC family. As to quaternary structure, the system is composed of three essential subunits: KdpA, KdpB and KdpC.

It is found in the cell membrane. In terms of biological role, part of the high-affinity ATP-driven potassium transport (or Kdp) system, which catalyzes the hydrolysis of ATP coupled with the electrogenic transport of potassium into the cytoplasm. This subunit acts as a catalytic chaperone that increases the ATP-binding affinity of the ATP-hydrolyzing subunit KdpB by the formation of a transient KdpB/KdpC/ATP ternary complex. The polypeptide is Potassium-transporting ATPase KdpC subunit (Clostridium perfringens (strain ATCC 13124 / DSM 756 / JCM 1290 / NCIMB 6125 / NCTC 8237 / Type A)).